The chain runs to 176 residues: dCTP deaminase (176 aa).

DCTP contacts are provided by residues 99–104 (RSTLAR) and D115. E125 acts as the Proton donor/acceptor in catalysis. Q163 contributes to the dCTP binding site.

The protein belongs to the dCTP deaminase family. Homotrimer.

The enzyme catalyses dCTP + H2O + H(+) = dUTP + NH4(+). It functions in the pathway pyrimidine metabolism; dUMP biosynthesis; dUMP from dCTP (dUTP route): step 1/2. Catalyzes the deamination of dCTP to dUTP. The polypeptide is dCTP deaminase (Pyrobaculum islandicum (strain DSM 4184 / JCM 9189 / GEO3)).